The sequence spans 335 residues: Urokinase plasminogen activator surface receptor (335 aa).

Positions 1–22 (MGHPPLLPLLLLLHTCVPASWG) are cleaved as a signal peptide. UPAR/Ly6 domains lie at 23–114 (LRCM…RSRY), 115–213 (LECI…PQNG), and 214–305 (RQCY…YRSG). 3 disulfides stabilise this stretch: Cys25–Cys46, Cys28–Cys34, and Cys39–Cys67. N-linked (GlcNAc...) asparagine glycosylation occurs at Asn74. 11 cysteine pairs are disulfide-bonded: Cys93–Cys98, Cys117–Cys144, Cys120–Cys127, Cys137–Cys169, Cys175–Cys192, Cys193–Cys198, Cys216–Cys244, Cys219–Cys227, Cys237–Cys263, Cys269–Cys287, and Cys288–Cys293. An N-linked (GlcNAc...) asparagine glycan is attached at Asn124. N-linked (GlcNAc...) asparagine glycosylation is found at Asn184, Asn194, Asn222, and Asn255. The GPI-anchor amidated glycine moiety is linked to residue Gly305. The propeptide at 306–335 (AAPQPGPAHLSLTITLLMTARLWGGTLLWT) is removed in mature form.

Monomer. Interacts (via the UPAR/Ly6 domains) with SRPX2. Interacts with MRC2. Interacts with FAP (seprase); the interaction occurs at the cell surface of invadopodia membrane. Interacts with SORL1 (via N-terminal ectodomain); this interaction decreases PLAUR internalization. The ternary complex composed of PLAUR-PLAU-SERPINE1 also interacts with SORL1. Interacts with CD82; this interaction prevents PLAUR from binding to its high affinity ligand PLAU.

It localises to the cell membrane. The protein resides in the cell projection. It is found in the invadopodium membrane. Its function is as follows. Acts as a receptor for urokinase plasminogen activator. Plays a role in localizing and promoting plasmin formation. Mediates the proteolysis-independent signal transduction activation effects of U-PA. It is subject to negative-feedback regulation by U-PA which cleaves it into an inactive form. This chain is Urokinase plasminogen activator surface receptor (PLAUR), found in Pan troglodytes (Chimpanzee).